A 145-amino-acid polypeptide reads, in one-letter code: Bacilliredoxin SAOUHSC_01610 (145 aa).

It belongs to the bacilliredoxin family.

The polypeptide is Bacilliredoxin SAOUHSC_01610 (Staphylococcus aureus (strain NCTC 8325 / PS 47)).